The sequence spans 316 residues: Ribosomal protein L11 methyltransferase (316 aa).

S-adenosyl-L-methionine-binding residues include T157, G178, D200, and N243.

The protein belongs to the methyltransferase superfamily. PrmA family.

It is found in the cytoplasm. The enzyme catalyses L-lysyl-[protein] + 3 S-adenosyl-L-methionine = N(6),N(6),N(6)-trimethyl-L-lysyl-[protein] + 3 S-adenosyl-L-homocysteine + 3 H(+). Its function is as follows. Methylates ribosomal protein L11. The polypeptide is Ribosomal protein L11 methyltransferase (Streptococcus pneumoniae (strain P1031)).